Reading from the N-terminus, the 124-residue chain is uncharacterized protein (124 aa).

The segment at 1 to 28 is disordered; that stretch reads MGTSLRSQSFREPRPSYGRLHESQGRSL. Residues 9–28 show a composition bias toward basic and acidic residues; the sequence is SFREPRPSYGRLHESQGRSL.

This is an uncharacterized protein from Mus musculus (Mouse).